The primary structure comprises 100 residues: Integration host factor subunit alpha (100 aa).

It belongs to the bacterial histone-like protein family. In terms of assembly, heterodimer of an alpha and a beta chain.

This protein is one of the two subunits of integration host factor, a specific DNA-binding protein that functions in genetic recombination as well as in transcriptional and translational control. This Buchnera aphidicola subsp. Schizaphis graminum (strain Sg) protein is Integration host factor subunit alpha.